We begin with the raw amino-acid sequence, 832 residues long: Protein P (832 aa).

Residues 1-177 (MPLSYQHFRR…FCGSPYSWEQ (177 aa)) form a terminal protein domain (TP) region. Positions 178 to 335 (DLQHGAESIH…YCLSLIVNLL (158 aa)) are spacer. 2 disordered regions span residues 186–218 (IHQQSSGILSRPPVGSSLQSKHRKSRLGLQSQQ) and 239–266 (TARRPFGVEPSGSGHTTHRASKSASCLY). Positions 336–679 (EDWGPCDEYG…YLNLYPVARQ (344 aa)) are polymerase/reverse transcriptase domain (RT). One can recognise a Reverse transcriptase domain in the interval 346-589 (EHHIRIPRTP…YSLHFMGYVI (244 aa)). Residues D418, D540, and D541 each coordinate Mg(2+).

The protein belongs to the hepadnaviridae P protein family.

The catalysed reaction is DNA(n) + a 2'-deoxyribonucleoside 5'-triphosphate = DNA(n+1) + diphosphate. It carries out the reaction Endonucleolytic cleavage to 5'-phosphomonoester.. Its activity is regulated as follows. Activated by host HSP70 and HSP40 in vitro to be able to bind the epsilon loop of the pgRNA. Because deletion of the RNase H region renders the protein partly chaperone-independent, the chaperones may be needed indirectly to relieve occlusion of the RNA-binding site by this domain. Inhibited by several reverse-transcriptase inhibitors: Lamivudine, Adefovir and Entecavir. Multifunctional enzyme that converts the viral RNA genome into dsDNA in viral cytoplasmic capsids. This enzyme displays a DNA polymerase activity that can copy either DNA or RNA templates, and a ribonuclease H (RNase H) activity that cleaves the RNA strand of RNA-DNA heteroduplexes in a partially processive 3'- to 5'-endonucleasic mode. Neo-synthesized pregenomic RNA (pgRNA) are encapsidated together with the P protein, and reverse-transcribed inside the nucleocapsid. Initiation of reverse-transcription occurs first by binding the epsilon loop on the pgRNA genome, and is initiated by protein priming, thereby the 5'-end of (-)DNA is covalently linked to P protein. Partial (+)DNA is synthesized from the (-)DNA template and generates the relaxed circular DNA (RC-DNA) genome. After budding and infection, the RC-DNA migrates in the nucleus, and is converted into a plasmid-like covalently closed circular DNA (cccDNA). The activity of P protein does not seem to be necessary for cccDNA generation, and is presumably released from (+)DNA by host nuclear DNA repair machinery. The sequence is that of Protein P from Homo sapiens (Human).